Consider the following 115-residue polypeptide: Probable non-functional immunoglobulin heavy variable 3-38-3 (115 aa).

Residues 1-19 form the signal peptide; sequence MQFVLSWVFLVAILKGVQC. Positions 20 to 44 are framework-1; sequence EVQLVESRGVLVQPGGSLRLSCAAS. Residues 31–115 form the Ig-like domain; that stretch reads VQPGGSLRLS…EDTAVYYCKK (85 aa). C41 and C113 are oxidised to a cystine. The tract at residues 45–52 is complementarity-determining-1; the sequence is GFTVSSNE. The framework-2 stretch occupies residues 53 to 69; the sequence is MSWVRQAPGKGLEWVSS. Residues 70 to 75 form a complementarity-determining-2 region; it reads ISGGST. The framework-3 stretch occupies residues 76-113; it reads YYADSRKGRFTISRDNSKNTLHLQMNSLRAEDTAVYYC. Positions 114–115 are complementarity-determining-3; that stretch reads KK.

In terms of assembly, immunoglobulins are composed of two identical heavy chains and two identical light chains; disulfide-linked.

Its subcellular location is the secreted. The protein localises to the cell membrane. Its function is as follows. Probable non-functional open reading frame (ORF) of V region of the variable domain of immunoglobulin heavy chains. Non-functional ORF generally cannot participate in the synthesis of a productive immunoglobulin chain due to altered V-(D)-J or switch recombination and/or splicing site (at mRNA level) and/or conserved amino acid change (protein level). Immunoglobulins, also known as antibodies, are membrane-bound or secreted glycoproteins produced by B lymphocytes. In the recognition phase of humoral immunity, the membrane-bound immunoglobulins serve as receptors which, upon binding of a specific antigen, trigger the clonal expansion and differentiation of B lymphocytes into immunoglobulins-secreting plasma cells. Secreted immunoglobulins mediate the effector phase of humoral immunity, which results in the elimination of bound antigens. The antigen binding site is formed by the variable domain of one heavy chain, together with that of its associated light chain. Thus, each immunoglobulin has two antigen binding sites with remarkable affinity for a particular antigen. The variable domains are assembled by a process called V-(D)-J rearrangement and can then be subjected to somatic hypermutations which, after exposure to antigen and selection, allow affinity maturation for a particular antigen. The sequence is that of Probable non-functional immunoglobulin heavy variable 3-38-3 from Homo sapiens (Human).